The chain runs to 158 residues: Tryptophan-rich sensory protein (158 aa).

A run of 5 helical transmembrane segments spans residues 5–25 (WALF…GALL), 44–65 (WVFP…MRVA), 73–93 (ALAF…VFFG), 97–119 (MATA…WAFF), and 124–144 (WAGV…GLNF).

This sequence belongs to the TspO/BZRP family. Homodimer.

Its subcellular location is the membrane. The protein localises to the cell inner membrane. In terms of biological role, may play a role in the transmembrane transport of tetrapyrroles and similar compounds, and thereby contribute to the regulation of tetrapyrrole biosynthesis. Binds tetrapyrroles and promotes the photooxidative degradation of protoporphyrin IX. Binds protoporphyrin IX, hemin, and coproporphyrin III, but does not bind delta-aminolevulinic acid. Can bind bilirubin, curcumin, gossypol, retinoic acid, cholesterol and the benzodiazepine receptor agonist PK-11195 (in vitro). Plays a role in the response to low oxygen levels and in the regulation of the biosynthesis of photosynthetic pigments. The sequence is that of Tryptophan-rich sensory protein from Cereibacter sphaeroides (Rhodobacter sphaeroides).